Here is a 219-residue protein sequence, read N- to C-terminus: Uracil-DNA glycosylase (219 aa).

Residue Asp63 is the Proton acceptor of the active site.

This sequence belongs to the uracil-DNA glycosylase (UDG) superfamily. UNG family.

Its subcellular location is the cytoplasm. The catalysed reaction is Hydrolyzes single-stranded DNA or mismatched double-stranded DNA and polynucleotides, releasing free uracil.. Excises uracil residues from the DNA which can arise as a result of misincorporation of dUMP residues by DNA polymerase or due to deamination of cytosine. This is Uracil-DNA glycosylase from Mesomycoplasma hyopneumoniae (strain 7448) (Mycoplasma hyopneumoniae).